A 425-amino-acid polypeptide reads, in one-letter code: MSSFQCVKGTRDILPDESLLWSFVSSHFHHVASLYGFREIRTPMFEYTDLFQRGIGATTDIVGKEMFSFQPDPAGRSITLRPEMTAGVMRAALQNNLLAQAPLHKLFYIGELFRKERPQAGRQRQFNQCGAELLGVSSPAAVAEVMSLMMHFFGALGLTGLTLKVNTLGNAEERLAYREALQAYFAPHRAMLDASSQERLEKNPLRILDSKNPALQELIAAAPRLYDYLQEASLRDFEKVLFYLTERRISYTIDYRLVRGLDYYCHTAFEVTSNELGAQDAIGGGGRYDALARELGSATDIPAVGFAVGMERLLIVLEKQGLLGNRHARPPRLYVVVQQQEMLDHALQLVWRLRNGGIRSELDLAGRSMKAQMREANKLGALYALFVGASECASGKYGLKNLATSEQTDLSIEAVMQLLHDHVTE.

This sequence belongs to the class-II aminoacyl-tRNA synthetase family. As to quaternary structure, homodimer.

Its subcellular location is the cytoplasm. The enzyme catalyses tRNA(His) + L-histidine + ATP = L-histidyl-tRNA(His) + AMP + diphosphate + H(+). This is Histidine--tRNA ligase from Chlorobium chlorochromatii (strain CaD3).